The chain runs to 65 residues: Large ribosomal subunit protein bL31 (65 aa).

Zn(2+)-binding residues include C16, C18, C36, and C39.

This sequence belongs to the bacterial ribosomal protein bL31 family. Type A subfamily. As to quaternary structure, part of the 50S ribosomal subunit. Zn(2+) is required as a cofactor.

Binds the 23S rRNA. The polypeptide is Large ribosomal subunit protein bL31 (Brevibacillus brevis (strain 47 / JCM 6285 / NBRC 100599)).